A 351-amino-acid polypeptide reads, in one-letter code: tRNA (guanine(10)-N2)-dimethyltransferase (351 aa).

The 109-residue stretch at 57–165 folds into the THUMP domain; that stretch reads EGHRIIFRYN…ENTFFISNVL (109 aa).

It belongs to the methyltransferase superfamily. Trm-G10 family. As to quaternary structure, monomer.

The protein localises to the cytoplasm. It catalyses the reaction guanosine(10) in tRNA + 2 S-adenosyl-L-methionine = N(2)-dimethylguanosine(10) in tRNA + 2 S-adenosyl-L-homocysteine + 2 H(+). Its function is as follows. Catalyzes the adenosylmethionine-dependent methylation of the exocyclic amino group (N(2)) of guanosine at position 10 of various tRNAs. Acts via a two-step process that leads to the formation of either N(2)-monomethyl (m(2)G) or N(2)-dimethylguanosine (m(2)(2)G). The protein is tRNA (guanine(10)-N2)-dimethyltransferase (trmG10) of Methanocaldococcus jannaschii (strain ATCC 43067 / DSM 2661 / JAL-1 / JCM 10045 / NBRC 100440) (Methanococcus jannaschii).